We begin with the raw amino-acid sequence, 522 residues long: Putative E3 ubiquitin-protein ligase RING1a (522 aa).

A compositionally biased stretch (polar residues) spans 1-10 (MSVKNNSFSS). The segment at 1–119 (MSVKNNSFSS…RSPSSISGDQ (119 aa)) is disordered. Residues 32–64 (LQEKDETKEEKEGDEEVKHDEAEEDQEVVKPND) are compositionally biased toward basic and acidic residues. Residues 65–106 (AEEDDDGDDAEEDEEEEVEAEEDEEAEEEEEEEEEEEEEEED) show a composition bias toward acidic residues. An RING-type zinc finger spans residues 136–176 (CPICLGIIKKTRTVMECLHRFCRECIDKSMRLGNNECPACR). Disordered stretches follow at residues 250-347 (VLMR…DTKG) and 363-385 (RGGT…KSVR). The segment covering 287–306 (NNNRGRDKDSSSDERGTEVR) has biased composition (basic and acidic residues). Over residues 316–325 (SRSTQHPSSS) the composition is skewed to low complexity. Composition is skewed to polar residues over residues 326-336 (GANKNNGNCAD) and 366-384 (TRSN…SKSV).

In terms of assembly, homodimer or heterodimer with RING1B. Interacts with CLF. Component of the PRC1-like complex, at least composed of RING1A, RING1B and LHP1.

It localises to the nucleus. The enzyme catalyses S-ubiquitinyl-[E2 ubiquitin-conjugating enzyme]-L-cysteine + [acceptor protein]-L-lysine = [E2 ubiquitin-conjugating enzyme]-L-cysteine + N(6)-ubiquitinyl-[acceptor protein]-L-lysine.. It functions in the pathway protein modification; protein ubiquitination. In terms of biological role, putative E3 ubiquitin-protein ligase that mediates monoubiquitination of 'Lys-119' of histone H2A (H2AK119ub), thereby playing a central role in histone code and gene regulation. Functionally, as part of the PRC1-like complex, repress class I KNOX gene expression. PcG PRC1 complex maintains the transcriptionally repressive state of many genes, including Hox genes, throughout development. PcG PRC1 complex acts via chromatin remodeling and modification of histones, rendering chromatin heritably changed in its expressibility. The polypeptide is Putative E3 ubiquitin-protein ligase RING1a (RING1A) (Arabidopsis thaliana (Mouse-ear cress)).